Consider the following 284-residue polypeptide: RNase adapter protein RapZ (284 aa).

8-15 (GRSGSGKS) is an ATP binding site. 56 to 59 (DVRN) is a GTP binding site. Positions 266–284 (RSRGKNVQSRHRTLEKRRS) are RNA-binding.

Belongs to the RapZ-like family. RapZ subfamily. In terms of assembly, homotrimer.

Modulates the synthesis of GlmS, by affecting the processing and stability of the regulatory small RNA GlmZ. When glucosamine-6-phosphate (GlcN6P) concentrations are high in the cell, RapZ binds GlmZ and targets it to cleavage by RNase E. Consequently, GlmZ is inactivated and unable to activate GlmS synthesis. Under low GlcN6P concentrations, RapZ is sequestered and inactivated by an other regulatory small RNA, GlmY, preventing GlmZ degradation and leading to synthesis of GlmS. This Erwinia tasmaniensis (strain DSM 17950 / CFBP 7177 / CIP 109463 / NCPPB 4357 / Et1/99) protein is RNase adapter protein RapZ.